The sequence spans 98 residues: Large ribosomal subunit protein uL23 (98 aa).

Belongs to the universal ribosomal protein uL23 family. As to quaternary structure, part of the 50S ribosomal subunit. Contacts protein L29, and trigger factor when it is bound to the ribosome.

Its function is as follows. One of the early assembly proteins it binds 23S rRNA. One of the proteins that surrounds the polypeptide exit tunnel on the outside of the ribosome. Forms the main docking site for trigger factor binding to the ribosome. The sequence is that of Large ribosomal subunit protein uL23 from Ruegeria pomeroyi (strain ATCC 700808 / DSM 15171 / DSS-3) (Silicibacter pomeroyi).